Here is a 125-residue protein sequence, read N- to C-terminus: Ribonuclease P protein component (125 aa).

This sequence belongs to the RnpA family. In terms of assembly, consists of a catalytic RNA component (M1 or rnpB) and a protein subunit.

It carries out the reaction Endonucleolytic cleavage of RNA, removing 5'-extranucleotides from tRNA precursor.. In terms of biological role, RNaseP catalyzes the removal of the 5'-leader sequence from pre-tRNA to produce the mature 5'-terminus. It can also cleave other RNA substrates such as 4.5S RNA. The protein component plays an auxiliary but essential role in vivo by binding to the 5'-leader sequence and broadening the substrate specificity of the ribozyme. The protein is Ribonuclease P protein component of Clostridium beijerinckii (strain ATCC 51743 / NCIMB 8052) (Clostridium acetobutylicum).